Here is an 893-residue protein sequence, read N- to C-terminus: DNA endonuclease RBBP8 (893 aa).

The essential for binding to the MRN complex and for RPA focus formation on DNA damage stretch occupies residues 22–45 (ELWTKLKEYHDKEVQGLQVKVTKL). Positions 35–84 (VQGLQVKVTKLKKERILDAQRLEEFFTKNQQLRDQQKVLQETIKILEDRL) form a coiled coil. The required for interaction with LMO4, probably by stabilizing the interaction through RPPB8 dimerization stretch occupies residues 45–160 (LKKERILDAQ…AELACEENII (116 aa)). Glycyl lysine isopeptide (Lys-Gly) (interchain with G-Cter in SUMO2) cross-links involve residues K62 and K115. Residues 117-138 (ITELMNEKNTLQEENKKLSEQL) are a coiled coil. K193 is covalently cross-linked (Glycyl lysine isopeptide (Lys-Gly) (interchain with G-Cter in SUMO2)). Phosphoserine occurs at positions 233 and 276. The span at 296–307 (MESARSKEDSLR) shows a compositional bias: basic and acidic residues. Residues 296–324 (MESARSKEDSLRFSDSASKTPPQEFTTRA) are disordered. Polar residues predominate over residues 308–324 (FSDSASKTPPQEFTTRA). Position 315 is a phosphothreonine (T315). Phosphoserine occurs at positions 325, 326, and 348. Glycyl lysine isopeptide (Lys-Gly) (interchain with G-Cter in SUMO2) cross-links involve residues K359 and K377. S378 is modified (phosphoserine). Glycyl lysine isopeptide (Lys-Gly) (interchain with G-Cter in SUMO2) cross-links involve residues K394, K403, K409, and K437. The PXDLS motif signature appears at 489–493 (PLDLS). The damage-recruitment motif stretch occupies residues 508 to 556 (NETSKNKLKQATIYEALKPIPKGSSSGRKALSGDCMPAKDSWETYCLQP). Residue K525 forms a Glycyl lysine isopeptide (Lys-Gly) (interchain with G-Cter in SUMO2); alternate linkage. Residues K529, K570, and K576 each participate in a glycyl lysine isopeptide (Lys-Gly) (interchain with G-Cter in SUMO2) cross-link. K602 participates in a covalent cross-link: Glycyl lysine isopeptide (Lys-Gly) (interchain with G-Cter in SUMO2); alternate. Glycyl lysine isopeptide (Lys-Gly) (interchain with G-Cter in SUMO2) cross-links involve residues K611, K636, and K638. Positions 639 to 683 (ALPSNQDTSFENIQWSVDPGADLSQYKMDVTVIDTKDSSHSRLGG) are required for interaction with LMO4, probably by making physical contact with LMO4. S662 is modified (phosphoserine; by ATM). Residue K674 forms a Glycyl lysine isopeptide (Lys-Gly) (interchain with G-Cter in SUMO2) linkage. At S677 the chain carries Phosphoserine. A Glycyl lysine isopeptide (Lys-Gly) (interchain with G-Cter in SUMO2) cross-link involves residue K716. S720 bears the Phosphoserine mark. S742 is subject to Phosphoserine; by ATM. Residue K778 forms a Glycyl lysine isopeptide (Lys-Gly) (interchain with G-Cter in SUMO2) linkage. Positions 836-838 (FRY) match the KLHL15-binding motif. A phosphothreonine mark is found at T843 and T855. K865 is covalently cross-linked (Glycyl lysine isopeptide (Lys-Gly) (interchain with G-Cter in SUMO2)). The disordered stretch occupies residues 869 to 893 (DLSPRPKRRQPYNAVFSPKGKEQRT).

Belongs to the COM1/SAE2/CtIP family. Homotetramer; formed by antiparallel association of helical extensions protruding from the N-termini of two parallel coiled-coil dimers. Forms a dumbbell-shaped particle in which polar globular domains are held about 30 nm apart by a central rod. Homotetramerization is required for DNA-end resection and repair. Interacts (via the PXDLS motif) with CTBP1; the interaction is disrupted via binding of the adenovirus E1A to CTBP1. Component of the BRCA1-RBBP8 complex. Interacts (the Ser-326 phosphorylated form) with BRCA1 (via the C-terminal BRCT domains): the interaction occurs in the G2 phase, ubiquitinates RBBP8 and involves RBBP8 in BRCA1-dependent G2/M checkpoint control on DNA damage. Interacts with RB1. Interacts with the MRN complex. Interacts directly with MRE11; the interaction is required for efficient homologous recombination (HR) and regulation of the MRN complex. Interacts (when phosphorylated by CDK1) with NBN; promoting association with the MRN complex. Interacts with LMO4 (via the LIM zinc-binding 1 domain). Interacts with SIAH1. Interacts with RNF138. Interacts with EXD2. Interacts with CUL3 and KLHL15; this interaction leads to RBBP8 proteasomal degradation. Directly interacts with PIN1; this interaction depends upon RBBP8 phosphorylation, predominantly at Thr-315. Interacts with FZR1; this interaction leads to APC/C-mediated RBBP8 proteasomal degradation. Interacts with AUNIP; leading to recruit RBBP8 to sites of DNA damage. Interacts with SAMHD1. Interacts with HDGFL2. Post-translationally, hyperphosphorylation upon ionizing radiation results in dissociation from BRCA1. Phosphorylation at Thr-843 by CDK1 is essential for the recruitment to DNA and the DNA repair function. Phosphorylation at Thr-843 and Thr-855 promote interaction with NBN and recruitment to double-strand breaks (DSBs). Phosphorylated on Ser-326 as cells enter G2 phase. Phosphorylated at Ser-326 as cells enter G2 phase. This phosphorylation is required for binding BRCA1 and for the G2/M DNA damage transition checkpoint control. Phosphorylation at Thr-315 is required for PIN1-binding, while phosphorylation at Ser-276 serves as a PIN1 isomerization site. Phosphorylation at Thr-315 is cell-cycle dependent. It steadily increases during S phase, peaks at late S/G2 phase, and drops at G1. Phosphorylation is not required for tetramerization. Binds to DNA more strongly when dephosphorylated. In terms of processing, ubiquitinated. Ubiquitination at multiple sites by BRCA1 (via its N-terminal RING domain) does not lead to its proteasomal degradation but instead the ubiquitinated RBBP8 binds to chromatin following DNA damage and may play a role in G2/M checkpoint control. Ubiquitinated by RNF138 at its N-terminus. Ubiquitinated through 'Lys-48' by the E3 CUL3-KLHL15 complex; this modification leads to proteasomal degradation. Ubiquitinated by the E3 FZR1/APC/C complex; this modification leads to proteasomal degradation.

The protein resides in the nucleus. It localises to the chromosome. Functionally, endonuclease that cooperates with the MRE11-RAD50-NBN (MRN) complex in DNA-end resection, the first step of double-strand break (DSB) repair through the homologous recombination (HR) pathway. HR is restricted to S and G2 phases of the cell cycle and preferentially repairs DSBs resulting from replication fork collapse. Key determinant of DSB repair pathway choice, as it commits cells to HR by preventing classical non-homologous end-joining (NHEJ). Specifically promotes the endonuclease activity of the MRN complex to clear DNA ends containing protein adducts: recruited to DSBs by NBN following phosphorylation by CDK1, and promotes the endonuclease activity of MRE11 to clear protein-DNA adducts and generate clean double-strand break ends. Functions downstream of the MRN complex and ATM, promotes ATR activation and its recruitment to DSBs in the S/G2 phase facilitating the generation of ssDNA. Component of the BRCA1-RBBP8 complex that regulates CHEK1 activation and controls cell cycle G2/M checkpoints on DNA damage. During immunoglobulin heavy chain class-switch recombination, promotes microhomology-mediated alternative end joining (A-NHEJ) and plays an essential role in chromosomal translocations. Binds preferentially to DNA Y-junctions and to DNA substrates with blocked ends and promotes intermolecular DNA bridging. This Mus musculus (Mouse) protein is DNA endonuclease RBBP8 (Rbbp8).